Here is a 213-residue protein sequence, read N- to C-terminus: MTDKPHQCVIIGIAGASASGKSLIASTLYRELCYQVGDEHIGIISEGSYYKDQSGMTMTERVKTNYDHPSAMDHSLLFQYIQMLKAGLPIEMPVYSYVEHTRRPETLHLRPKKVIILEEILLLTDLRLRQEMNLSIFVDTPLDICLMRRMKRDVNERGRSMDSVIGEYQRTVRPMFLQFIEPSKQYADIIVPRGGKNRIAIDILKAKISQFFE.

15–22 (GASASGKS) provides a ligand contact to ATP.

The protein belongs to the uridine kinase family.

It localises to the cytoplasm. It catalyses the reaction uridine + ATP = UMP + ADP + H(+). It carries out the reaction cytidine + ATP = CMP + ADP + H(+). The protein operates within pyrimidine metabolism; CTP biosynthesis via salvage pathway; CTP from cytidine: step 1/3. It participates in pyrimidine metabolism; UMP biosynthesis via salvage pathway; UMP from uridine: step 1/1. The sequence is that of Uridine kinase from Sodalis glossinidius (strain morsitans).